Reading from the N-terminus, the 877-residue chain is Leucine--tRNA ligase (877 aa).

The 'HIGH' region motif lies at proline 43–histidine 53. The 'KMSKS' region signature appears at lysine 628–serine 632. Position 631 (lysine 631) interacts with ATP.

It belongs to the class-I aminoacyl-tRNA synthetase family.

It is found in the cytoplasm. It carries out the reaction tRNA(Leu) + L-leucine + ATP = L-leucyl-tRNA(Leu) + AMP + diphosphate. The chain is Leucine--tRNA ligase from Brucella canis (strain ATCC 23365 / NCTC 10854 / RM-666).